A 673-amino-acid polypeptide reads, in one-letter code: MACLLEAPLRISVLSEVTATSRHYVDRLFDPDPQNVLQGVIDMKNAVIGNNKQKANLIVLGAVPRLLYLLQQSSSTLELRTECAVVLGSLSMGTENNIKSLVDCHIIPALLQGLLCSDLIFIEACLRCLRTVFISPVTPVQLLYTDPTVIPHLMSLLSRSQHTQEYITQIFAHCCKTPEHQTVLFNHGAIQNIAPLLISPSYKVRMQALKCFSVLAYENAQVSMTLVNVLVDGEQLSQVFVRMMQRDKPIEMQLTAAKCLTYMCRAGAIRTEDNCIVLKTLPCLVRMCSKERLLEERVEGAETLAYLMEPDIELQRIASVTDHLVSMLADYFKYPSSVSAITDIKRLDHDLKHAHELRQAAFKLYASLGSNDEDIRKKITETENMMDRIVSGLSESSIKVRLAAVRCLHSLSRSVQQLRTSFHDHAVWKPLMKLLQNAPDEVLVMASSTLCNLLLEFSPSKEPILESGVIELLCSLTQSDSSALRVNGIWALMNMAFQADQKVKVEIVRALGTEQLFRLLSDPDTNVLMKTLGLLRNLLSTRPHIDQIMSSHGKQIMQAVTLILEGEHSIEVKEQTLCILANIADGNTAKELIMTDDDMLQKIKYYMGHSNVKLQLAATFCISNLIWNEEDGSQERQDKLREMGFVDILHKLTQASDPDLCDRAKTAMQQYLA.

ARM repeat units follow at residues 51–92, 95–134, 138–176, 178–217, 225–265, 269–309, 313–352, 374–413, 416–455, 458–497, 501–540, 543–585, 588–627, and 634–673; these read NKQK…SLSM, ENNIKSLVDCHIIPALLQGLLCSDLIFIEACLRCLRTVFI, TPVQLLYTDPTVIPHLMSLLSRSQHTQEYITQIFAHCCK, PEHQTVLFNHGAIQNIAPLLISPSYKVRMQALKCFSVLAY, TLVN…YMCR, IRTE…YLME, ELQRIASVTDHLVSMLADYFKYPSSVSAITDIKRLDHDLK, DIRKKITETENMMDRIVSGLSESSIKVRLAAVRCLHSLSR, QQLRTSFHDHAVWKPLMKLLQNAPDEVLVMASSTLCNLLL, SPSKEPILESGVIELLCSLTQSDSSALRVNGIWALMNMAF, QKVKVEIVRALGTEQLFRLLSDPDTNVLMKTLGLLRNLLS, PHID…NIAD, TAKELIMTDDDMLQKIKYYMGHSNVKLQLAATFCISNLIW, and QERQDKLREMGFVDILHKLTQASDPDLCDRAKTAMQQYLA.

As to quaternary structure, identified in the CTLH complex that contains at least MAEA, RMND5A (or alternatively its paralog RMND5B), GID8, WDR26, and RANBP9 and/or RANBP10; ARMC8 has an ancillary role in the complex.

It localises to the nucleus. It is found in the cytoplasm. In terms of biological role, component of the CTLH E3 ubiquitin-protein ligase complex that mediates ubiquitination and subsequent proteasomal degradation of target proteins. The polypeptide is Armadillo repeat-containing protein 8 (armc8) (Danio rerio (Zebrafish)).